Consider the following 335-residue polypeptide: Glyceraldehyde-3-phosphate dehydrogenase (335 aa).

NAD(+)-binding positions include 12–13 (RI), aspartate 34, arginine 78, and serine 120. D-glyceraldehyde 3-phosphate is bound by residues 151 to 153 (SCT) and threonine 182. Catalysis depends on cysteine 152, which acts as the Nucleophile. An NAD(+)-binding site is contributed by asparagine 183. D-glyceraldehyde 3-phosphate is bound by residues arginine 197, 210-211 (TG), and arginine 233. Residue asparagine 315 coordinates NAD(+).

Belongs to the glyceraldehyde-3-phosphate dehydrogenase family. As to quaternary structure, homotetramer.

It is found in the cytoplasm. It catalyses the reaction D-glyceraldehyde 3-phosphate + phosphate + NAD(+) = (2R)-3-phospho-glyceroyl phosphate + NADH + H(+). The protein operates within carbohydrate degradation; glycolysis; pyruvate from D-glyceraldehyde 3-phosphate: step 1/5. Catalyzes the oxidative phosphorylation of glyceraldehyde 3-phosphate (G3P) to 1,3-bisphosphoglycerate (BPG) using the cofactor NAD. The first reaction step involves the formation of a hemiacetal intermediate between G3P and a cysteine residue, and this hemiacetal intermediate is then oxidized to a thioester, with concomitant reduction of NAD to NADH. The reduced NADH is then exchanged with the second NAD, and the thioester is attacked by a nucleophilic inorganic phosphate to produce BPG. This is Glyceraldehyde-3-phosphate dehydrogenase (gap) from Geobacillus stearothermophilus (Bacillus stearothermophilus).